The primary structure comprises 420 residues: Glucose-1-phosphate adenylyltransferase (420 aa).

Alpha-D-glucose 1-phosphate is bound by residues Tyr107, Gly172, 187–188 (EK), and Ser205.

The protein belongs to the bacterial/plant glucose-1-phosphate adenylyltransferase family. Homotetramer.

It carries out the reaction alpha-D-glucose 1-phosphate + ATP + H(+) = ADP-alpha-D-glucose + diphosphate. It participates in glycan biosynthesis; glycogen biosynthesis. Its function is as follows. Involved in the biosynthesis of ADP-glucose, a building block required for the elongation reactions to produce glycogen. Catalyzes the reaction between ATP and alpha-D-glucose 1-phosphate (G1P) to produce pyrophosphate and ADP-Glc. This chain is Glucose-1-phosphate adenylyltransferase, found in Rhizobium meliloti (strain 1021) (Ensifer meliloti).